Consider the following 132-residue polypeptide: Pro-MCH 1 (132 aa).

The first 24 residues, 1–24, serve as a signal peptide directing secretion; sequence MRDSVLSVIFALALFLECYTPSMA. A disulfide bond links Cys-120 and Cys-129.

This sequence belongs to the MCH family. As to expression, pituitary gland. Produced in neurons of lateral basal hypothalamus which project both to the brain and to the neural lobe of the pituitary gland from where MCH is released.

Functionally, plays a role in skin pigmentation by antagonizing the action of melanotropin alpha. Induces melanin concentration within the melanophores. May participate in the control of the hypothalamo-pituitary adrenal gland axis by inhibiting the release of ACTH. The polypeptide is Pro-MCH 1 (mch1) (Oncorhynchus kisutch (Coho salmon)).